The chain runs to 430 residues: Ribulose bisphosphate carboxylase (430 aa).

Lys-160 serves as the catalytic Proton acceptor. Lys-162 is a binding site for substrate. The Mg(2+) site is built by Lys-186, Asp-188, and Glu-189. Lys-186 carries the post-translational modification N6-carboxylysine. The Proton acceptor role is filled by His-278. Substrate-binding positions include Arg-279, His-311, 348-350 (SGG), and 370-373 (QAGG).

This sequence belongs to the RuBisCO large chain family. Type III subfamily. In terms of assembly, homodimer or homodecamer. In contrast to form I RuBisCO, the form III RuBisCO is composed solely of large subunits. It depends on Mg(2+) as a cofactor.

It carries out the reaction 2 (2R)-3-phosphoglycerate + 2 H(+) = D-ribulose 1,5-bisphosphate + CO2 + H2O. The enzyme catalyses D-ribulose 1,5-bisphosphate + O2 = 2-phosphoglycolate + (2R)-3-phosphoglycerate + 2 H(+). Catalyzes the addition of molecular CO(2) and H(2)O to ribulose 1,5-bisphosphate (RuBP), generating two molecules of 3-phosphoglycerate (3-PGA). Functions in an archaeal AMP degradation pathway, together with AMP phosphorylase and R15P isomerase. The sequence is that of Ribulose bisphosphate carboxylase from Pyrococcus horikoshii (strain ATCC 700860 / DSM 12428 / JCM 9974 / NBRC 100139 / OT-3).